Consider the following 253-residue polypeptide: MKHIVIPARFSSSRLPGKPLLLIHDRPMILRVVDQAKKVEGFDDLCVATDDERIAEICCAEGVDVVLTSADHPSGTDRLSEVARIKGWDADDIIVNVQGDEPLLPAQLVQQVAKLLVDKPNCSMSTLCEPIHALDEFQRDSIVKVVMSKQNEALYFSRATIPYDRDSAKQAEPTLHSQAFRHLGLYAYRVSLLQEYVTWEMGKLEKLESLEQLRVLENGHRIAIAVAEANLPPGVDTQADLDRLNNMPVESFE.

It belongs to the KdsB family.

The protein resides in the cytoplasm. It carries out the reaction 3-deoxy-alpha-D-manno-oct-2-ulosonate + CTP = CMP-3-deoxy-beta-D-manno-octulosonate + diphosphate. Its pathway is nucleotide-sugar biosynthesis; CMP-3-deoxy-D-manno-octulosonate biosynthesis; CMP-3-deoxy-D-manno-octulosonate from 3-deoxy-D-manno-octulosonate and CTP: step 1/1. It participates in bacterial outer membrane biogenesis; lipopolysaccharide biosynthesis. In terms of biological role, activates KDO (a required 8-carbon sugar) for incorporation into bacterial lipopolysaccharide in Gram-negative bacteria. This Acinetobacter baumannii (strain AYE) protein is 3-deoxy-manno-octulosonate cytidylyltransferase.